Consider the following 223-residue polypeptide: Probable transaldolase (223 aa).

Lysine 83 (schiff-base intermediate with substrate) is an active-site residue.

It belongs to the transaldolase family. Type 3B subfamily.

It is found in the cytoplasm. It carries out the reaction D-sedoheptulose 7-phosphate + D-glyceraldehyde 3-phosphate = D-erythrose 4-phosphate + beta-D-fructose 6-phosphate. It functions in the pathway carbohydrate degradation; pentose phosphate pathway; D-glyceraldehyde 3-phosphate and beta-D-fructose 6-phosphate from D-ribose 5-phosphate and D-xylulose 5-phosphate (non-oxidative stage): step 2/3. Its function is as follows. Transaldolase is important for the balance of metabolites in the pentose-phosphate pathway. This is Probable transaldolase from Myxococcus xanthus (strain DK1622).